The following is a 306-amino-acid chain: Probable arylamine N-acetyltransferase 3 (306 aa).

C75 (acyl-thioester intermediate) is an active-site residue. Catalysis depends on residues H115 and D130.

The protein belongs to the arylamine N-acetyltransferase family.

The enzyme catalyses an arylamine + acetyl-CoA = an N-acetylarylamine + CoA. In Dictyostelium discoideum (Social amoeba), this protein is Probable arylamine N-acetyltransferase 3.